We begin with the raw amino-acid sequence, 238 residues long: LexA repressor (238 aa).

Positions 26–46 form a DNA-binding region, H-T-H motif; that stretch reads FDEMKDALELRSKSGIHRLIS. Residues Ser159 and Lys197 each act as for autocatalytic cleavage activity in the active site.

The protein belongs to the peptidase S24 family. As to quaternary structure, homodimer.

It carries out the reaction Hydrolysis of Ala-|-Gly bond in repressor LexA.. Its function is as follows. Represses a number of genes involved in the response to DNA damage (SOS response), including recA and lexA. In the presence of single-stranded DNA, RecA interacts with LexA causing an autocatalytic cleavage which disrupts the DNA-binding part of LexA, leading to derepression of the SOS regulon and eventually DNA repair. The protein is LexA repressor of Gluconobacter oxydans (strain 621H) (Gluconobacter suboxydans).